The sequence spans 306 residues: Serine/threonine-protein kinase csk1 (306 aa).

The 296-residue stretch at 11–306 folds into the Protein kinase domain; that stretch reads LTDIRHLTDG…KVSARLSQYA (296 aa). Residues 17-25 and Lys-40 each bind ATP; that span reads LTDGTISEV. Asp-129 functions as the Proton acceptor in the catalytic mechanism.

Belongs to the protein kinase superfamily. CMGC Ser/Thr protein kinase family. CDC2/CDKX subfamily.

It catalyses the reaction L-seryl-[protein] + ATP = O-phospho-L-seryl-[protein] + ADP + H(+). The catalysed reaction is L-threonyl-[protein] + ATP = O-phospho-L-threonyl-[protein] + ADP + H(+). Its function is as follows. Acts as a CAK-activating kinase that specifically activates crk1 of the crk1-mcs2 CAK complex. The polypeptide is Serine/threonine-protein kinase csk1 (csk1) (Schizosaccharomyces pombe (strain 972 / ATCC 24843) (Fission yeast)).